A 247-amino-acid chain; its full sequence is OCIA domain-containing protein 1 (247 aa).

Positions 1-112 constitute an OCIA domain; it reads MNGRADFREP…KKLENSPLGE (112 aa). Ser-108, Ser-116, and Ser-123 each carry phosphoserine. Disordered regions lie at residues 113–153 and 167–230; these read ALRS…ADNI and SASM…MQER. 2 stretches are compositionally biased toward polar residues: residues 136–146 and 168–177; these read SNVSGQSSFGT and ASMNESTPTG. Composition is skewed to basic and acidic residues over residues 192 to 210 and 218 to 230; these read ESPK…KNRE and HKTD…MQER. A Phosphoserine modification is found at Ser-193.

The protein belongs to the OCIAD1 family. Interacts with OCIAD2. Interacts with STAT3. In terms of tissue distribution, expressed at high levels in the brain and at lower levels in the heart, ovary, testis and kidney. Expression is strongest in embryonic stem cells and in the blood vessels.

Its subcellular location is the endosome. Maintains stem cell potency. Increases STAT3 phosphorylation and controls ERK phosphorylation. May act as a scaffold, increasing STAT3 recruitment onto endosomes. This Mus musculus (Mouse) protein is OCIA domain-containing protein 1.